We begin with the raw amino-acid sequence, 128 residues long: Sulfurtransferase TusD (128 aa).

The active-site Cysteine persulfide intermediate is the cysteine 78.

Belongs to the DsrE/TusD family. Heterohexamer, formed by a dimer of trimers. The hexameric TusBCD complex contains 2 copies each of TusB, TusC and TusD. The TusBCD complex interacts with TusE.

It is found in the cytoplasm. Part of a sulfur-relay system required for 2-thiolation of 5-methylaminomethyl-2-thiouridine (mnm(5)s(2)U) at tRNA wobble positions. Accepts sulfur from TusA and transfers it in turn to TusE. This Buchnera aphidicola subsp. Acyrthosiphon pisum (strain 5A) protein is Sulfurtransferase TusD.